A 290-amino-acid polypeptide reads, in one-letter code: Protein EURL homolog (290 aa).

The interval S185–Q206 is disordered. Positions A228 to L251 form a coiled coil.

It belongs to the EURL family. Interacts with CCDC85B. In terms of tissue distribution, expressed in brain (at protein level). Expressed in neural progenitor cells and postmitotic neurons of the embryonic cerebral cortex.

Its function is as follows. Plays a role in cortical progenitor cell proliferation and differentiation. Promotes dendritic spine development of post-migratory cortical projection neurons by modulating the beta-catenin signaling pathway. This is Protein EURL homolog from Mus musculus (Mouse).